The chain runs to 216 residues: RNA chaperone ProQ (216 aa).

Over residues 105 to 115 the composition is skewed to basic and acidic residues; the sequence is ESKAKVAEKRK. Positions 105–159 are disordered; sequence ESKAKVAEKRKAQNAAKPGAKKSYKSKTVPAFKSSPKGTNQDNVKPKAKLPPPEK.

It belongs to the ProQ family.

The protein resides in the cytoplasm. Functionally, RNA chaperone with significant RNA binding, RNA strand exchange and RNA duplexing activities. In Pseudoalteromonas atlantica (strain T6c / ATCC BAA-1087), this protein is RNA chaperone ProQ.